Consider the following 611-residue polypeptide: Chaperone protein DnaK (611 aa).

A Phosphothreonine; by autocatalysis modification is found at Thr173. A compositionally biased stretch (low complexity) spans 579 to 592 (AAGQAEGAQGAQDA). Residues 579-598 (AAGQAEGAQGAQDAGAKKDN) form a disordered region.

It belongs to the heat shock protein 70 family.

Its function is as follows. Acts as a chaperone. This is Chaperone protein DnaK from Bacillus cereus (strain ATCC 10987 / NRS 248).